The following is a 290-amino-acid chain: MYG1 protein CPn_0489/CP_0265/CPj0489/CpB0509 (290 aa).

This sequence belongs to the MYG1 family.

This Chlamydia pneumoniae (Chlamydophila pneumoniae) protein is MYG1 protein CPn_0489/CP_0265/CPj0489/CpB0509.